Here is a 473-residue protein sequence, read N- to C-terminus: Pup--protein ligase (473 aa).

A Mg(2+)-binding site is contributed by glutamate 9. Residue arginine 54 participates in ATP binding. Residue tyrosine 56 participates in Mg(2+) binding. Aspartate 58 functions as the Proton acceptor in the catalytic mechanism. A Mg(2+)-binding site is contributed by glutamate 64. Residues threonine 67 and tryptophan 425 each coordinate ATP.

This sequence belongs to the Pup ligase/Pup deamidase family. Pup-conjugating enzyme subfamily.

The catalysed reaction is ATP + [prokaryotic ubiquitin-like protein]-L-glutamate + [protein]-L-lysine = ADP + phosphate + N(6)-([prokaryotic ubiquitin-like protein]-gamma-L-glutamyl)-[protein]-L-lysine.. It functions in the pathway protein degradation; proteasomal Pup-dependent pathway. The protein operates within protein modification; protein pupylation. Catalyzes the covalent attachment of the prokaryotic ubiquitin-like protein modifier Pup to the proteasomal substrate proteins, thereby targeting them for proteasomal degradation. This tagging system is termed pupylation. The ligation reaction involves the side-chain carboxylate of the C-terminal glutamate of Pup and the side-chain amino group of a substrate lysine. The polypeptide is Pup--protein ligase (Brachybacterium faecium (strain ATCC 43885 / DSM 4810 / JCM 11609 / LMG 19847 / NBRC 14762 / NCIMB 9860 / 6-10)).